The chain runs to 147 residues: Allograft inflammatory factor 1 (147 aa).

S2 bears the N-acetylserine mark. K11 bears the N6-acetyllysine mark. S39 is modified (phosphoserine). The EF-hand 1 domain maps to 45 to 80 (SKLEGFKEKYMEFDLNGNGDIDIMSLKRMLEKLGVP). 6 residues coordinate Ca(2+): D58, N60, N62, D64, T100, and D105. In terms of domain architecture, EF-hand 2; degenerate spans 81–115 (KTHLELKKLIGEVSSGSGETFSYPDFLRMMLGKRS). Positions 128-147 (AREKEKPTGPPAKKAISELP) are disordered.

In terms of assembly, homodimer (Potential). Monomer. Interacts with LCP1. Phosphorylated on serine residues. Detected in T-lymphocytes and peripheral blood mononuclear cells.

It is found in the cytoplasm. Its subcellular location is the cytoskeleton. The protein localises to the cell projection. The protein resides in the ruffle membrane. It localises to the phagocytic cup. Functionally, actin-binding protein that enhances membrane ruffling and RAC activation. Enhances the actin-bundling activity of LCP1. Binds calcium. Plays a role in RAC signaling and in phagocytosis. May play a role in macrophage activation and function. Promotes the proliferation of vascular smooth muscle cells and of T-lymphocytes. Enhances lymphocyte migration. Plays a role in vascular inflammation. The polypeptide is Allograft inflammatory factor 1 (AIF1) (Homo sapiens (Human)).